The sequence spans 291 residues: UDP-N-acetylenolpyruvoylglucosamine reductase (291 aa).

The FAD-binding PCMH-type domain maps to 19–186 (GIGGPAEWIA…VSARLKLASG (168 aa)). Arg165 is a catalytic residue. Residue Ser215 is the Proton donor of the active site. Residue Glu285 is part of the active site.

It belongs to the MurB family. It depends on FAD as a cofactor.

Its subcellular location is the cytoplasm. The enzyme catalyses UDP-N-acetyl-alpha-D-muramate + NADP(+) = UDP-N-acetyl-3-O-(1-carboxyvinyl)-alpha-D-glucosamine + NADPH + H(+). It functions in the pathway cell wall biogenesis; peptidoglycan biosynthesis. Its function is as follows. Cell wall formation. The polypeptide is UDP-N-acetylenolpyruvoylglucosamine reductase (Prochlorococcus marinus (strain NATL2A)).